We begin with the raw amino-acid sequence, 471 residues long: Protein hedgehog (471 aa).

Cys85 carries N-palmitoyl cysteine lipidation. Positions 149, 150, 155, 185, 186, 189, and 191 each coordinate Ca(2+). Gly257 is lipidated: Cholesterol glycine ester.

The protein belongs to the hedgehog family. In terms of assembly, interacts with shf. Interacts with ptc and CG5504/l(2)tid. The C-terminal part of the hedgehog protein precursor displays an autoproteolysis activity that results in the cleavage of the full-length protein into two parts (N-product and C-product). In addition, the C-terminal part displays a cholesterol transferase activity that results by the covalent attachment of a cholesterol moiety to the C-terminal of the newly generated N-product. The N-product is the active species in both local and long-range signaling, whereas the C-product has no signaling activity. Post-translationally, cholesterylation is required for N-product targeting to lipid rafts and multimerization. In terms of processing, N-palmitoylation by Rasp of the hedgehog N-product, within the secretory pathway, is required for the embryonic and larval patterning activities of the hedgehog signal. As to expression, in embryos, expression starts at stage 5 as a few stripes at the anterior and posterior ends, this expands to 17 stripes during stages 8-11. Expression is also seen in CNS and some PNS cells until stage 13-14, and in foregut, hindgut and salivary glands. In larvae, expression is seen in the posterior compartment of the wing, leg and antennal imaginal disks. In adults, high level of expression in specific regions of the proventriculus and hindgut, with slightly lower levels of expression in the posterior midgut. Relatively low levels of expression in the anterior midgut region.

Its subcellular location is the nucleus. It localises to the cytoplasm. The protein localises to the cell membrane. It carries out the reaction glycyl-L-cysteinyl-[protein] + cholesterol + H(+) = [protein]-C-terminal glycyl cholesterol ester + N-terminal L-cysteinyl-[protein]. Its function is as follows. The C-terminal part of the hedgehog protein precursor displays an autoproteolysis activity that results in the cleavage of the full-length protein into two parts (N-product and C-product). In addition, the C-terminal part displays a cholesterol transferase activity that results by the covalent attachment of a cholesterol moiety to the C-terminal of the newly generated N-product. Once cleaved, the C-product has no signaling activity and diffuses from the cell. The dually lipidated hedgehog protein N-product is a morphogen which is essential for a variety of patterning events during development. Establishes the anterior-posterior axis of the embryonic segments and patterns the larval imaginal disks. Binds to the patched (ptc) receptor, which functions in association with smoothened (smo), to activate the transcription of target genes wingless (wg), decapentaplegic (dpp) and ptc. In the absence of hh, ptc represses the constitutive signaling activity of smo through fused (fu). Essential component of a signaling pathway which regulates the Duox-dependent gut immune response to bacterial uracil; required to activate Cad99C-dependent endosome formation, norpA-dependent Ca2+ mobilization and p38 MAPK, which are essential steps in the Duox-dependent production of reactive oxygen species (ROS) in response to intestinal bacterial infection. During photoreceptor differentiation, it up-regulates transcription of Ubr3, which in turn promotes the hh-signaling pathway by mediating the ubiquitination and degradation of cos. This is Protein hedgehog from Drosophila melanogaster (Fruit fly).